A 91-amino-acid chain; its full sequence is Small ribosomal subunit protein uS19 (91 aa).

The protein belongs to the universal ribosomal protein uS19 family.

Its function is as follows. Protein S19 forms a complex with S13 that binds strongly to the 16S ribosomal RNA. The protein is Small ribosomal subunit protein uS19 of Pseudomonas putida (strain ATCC 700007 / DSM 6899 / JCM 31910 / BCRC 17059 / LMG 24140 / F1).